The primary structure comprises 438 residues: Serine hydroxymethyltransferase (438 aa).

(6S)-5,6,7,8-tetrahydrofolate is bound by residues leucine 135 and 139–141 (GHL). An N6-(pyridoxal phosphate)lysine modification is found at lysine 244. Residues 361-383 (GVPNDPLPPVKTSGIRVGSPAGT) form a disordered region.

It belongs to the SHMT family. Homodimer. Pyridoxal 5'-phosphate is required as a cofactor.

It is found in the cytoplasm. The enzyme catalyses (6R)-5,10-methylene-5,6,7,8-tetrahydrofolate + glycine + H2O = (6S)-5,6,7,8-tetrahydrofolate + L-serine. Its pathway is one-carbon metabolism; tetrahydrofolate interconversion. It functions in the pathway amino-acid biosynthesis; glycine biosynthesis; glycine from L-serine: step 1/1. Functionally, catalyzes the reversible interconversion of serine and glycine with tetrahydrofolate (THF) serving as the one-carbon carrier. This reaction serves as the major source of one-carbon groups required for the biosynthesis of purines, thymidylate, methionine, and other important biomolecules. Also exhibits THF-independent aldolase activity toward beta-hydroxyamino acids, producing glycine and aldehydes, via a retro-aldol mechanism. The polypeptide is Serine hydroxymethyltransferase (Rhizorhabdus wittichii (strain DSM 6014 / CCUG 31198 / JCM 15750 / NBRC 105917 / EY 4224 / RW1) (Sphingomonas wittichii)).